A 224-amino-acid polypeptide reads, in one-letter code: LOB domain-containing protein 15 (224 aa).

The LOB domain occupies 44–145 (TPCAACKLLR…AELTAVRSEI (102 aa)). Residues 171-224 (SGGVSVIAPPPQRPTTPPQPTTAHPPSPSSCVFSQPTTRDLEYGNIESENNYFG) form a disordered region. Positions 178–198 (APPPQRPTTPPQPTTAHPPSP) are enriched in pro residues.

Belongs to the LOB domain-containing protein family. As to expression, expressed in young shoots, roots, stems, leaves and flowers.

This Arabidopsis thaliana (Mouse-ear cress) protein is LOB domain-containing protein 15 (LBD15).